The following is a 134-amino-acid chain: Small ribosomal subunit protein uS9 (134 aa).

Basic and acidic residues predominate over residues 98 to 114; sequence SKQELKSHGFLTRDPRK. The segment at 98–134 is disordered; sequence SKQELKSHGFLTRDPRKKERKKYGHKKARKSFQFSKR. Residues 115 to 134 show a composition bias toward basic residues; that stretch reads KERKKYGHKKARKSFQFSKR.

Belongs to the universal ribosomal protein uS9 family.

This chain is Small ribosomal subunit protein uS9, found in Chlamydia caviae (strain ATCC VR-813 / DSM 19441 / 03DC25 / GPIC) (Chlamydophila caviae).